A 348-amino-acid polypeptide reads, in one-letter code: Calcium-gated potassium channel TvoK (348 aa).

A run of 3 helical transmembrane segments spans residues 19 to 39 (LTKVFMAFIIVVLIGSYLEFL), 52 to 72 (YFTAIWFTMETVTTVGYGDVV), and 80 to 100 (VVAMLIMVSGIGLLGTLTATI). In terms of domain architecture, RCK N-terminal spans 120 to 246 (KNHTIICNWN…VSAGATEVLS (127 aa)). In terms of domain architecture, RCK C-terminal spans 266 to 348 (DFILKSLSET…KKEVEEAIKG (83 aa)).

Heterooctamer composed of four full-length subunits and four soluble RCK domains.

It localises to the cell membrane. Calcium-gated potassium channel. Can also be activated by Mg(2+), Mn(2+) and Ni(2+). This Thermoplasma volcanium (strain ATCC 51530 / DSM 4299 / JCM 9571 / NBRC 15438 / GSS1) protein is Calcium-gated potassium channel TvoK.